Consider the following 216-residue polypeptide: Thymidine kinase (216 aa).

ATP-binding positions include 9–16 (GPMDSGKS) and 86–89 (DEAQ). Residue Glu-87 is the Proton acceptor of the active site.

Belongs to the thymidine kinase family. Homotetramer.

The protein resides in the cytoplasm. The enzyme catalyses thymidine + ATP = dTMP + ADP + H(+). The chain is Thymidine kinase from Cutibacterium acnes (strain DSM 16379 / KPA171202) (Propionibacterium acnes).